Consider the following 1403-residue polypeptide: Mannuronan C5-epimerase AlgE1 (1403 aa).

7 PbH1 repeats span residues 133–155, 157–179, 180–202, 204–226, 257–279, 280–302, and 320–359; these read DRDVTLERVEIREMSGYGFDPHE, TINLTIRDSVAHDNSLDGFVADY, QVGGVFENNVSYNNDRHGFNIVT, TNDFVLSNNVAYGNGGAGLVVQR, AHDVTLQNAEIYGNGLYGVRVYG, AQDVQILDNQIHDNSQNGAYAEV, and TTGTWLEGNVISGSANSTYGIQERADGTDYSSLYANSIDG. 2 disordered regions span residues 372-395 and 408-428; these read STVSSQSGSGQQATLEGSAGNDAL and AGDDRLNGDAGNDILDGGAGR. 8 Hemolysin-type calcium-binding repeats span residues 388–403, 406–422, 424–440, 557–573, 574–591, 697–712, 716–732, and 734–750; these read GSAGNDALSGTEAHET, GQAGDDRLNGDAGNDIL, GGAGRDNLTGGAGADTF, GYGGNDTLNGGAGDDIL, VGGAGRDSLTGGAGADVF, EGTDGNDTLQGTEANE, GLDGRDNLNGGAGDDIL, and GGAGRDTLTGGTGADTF. PbH1 repeat units follow at residues 977–999, 1001–1023, 1024–1046, 1048–1070, 1101–1123, 1124–1146, 1163–1185, and 1190–1212; these read DRNVTIERVEIREMSGYGFDPHE, TINLTIRDSVAHDNGLDGFVADY, LVDSVFENNVAYNNDRHGFNIVT, TYDFVMTNNVAYGNGGAGLTIQR, TNNVTLQNAEIYGNGSSGVRLYG, TEDVQILDNQIHDNSQNGTYPEV, TLNTRIEGNLIDASDNANYAVRE, and SDYTTLVDNDISGGQVASVQLSG. 3 Hemolysin-type calcium-binding repeats span residues 1227-1243, 1244-1261, and 1263-1279; these read GTDGNDVLVGSDANDQL, YGGAGDDRLDGGAGDDLL, and GGAGRDDLTGGTGADTF.

Belongs to the D-mannuronate C5-epimerase family. Ca(2+) serves as cofactor.

Its subcellular location is the secreted. The catalysed reaction is [(1-&gt;4)-beta-D-mannuronosyl](n) = [alginate](n). The protein operates within glycan biosynthesis; alginate biosynthesis. Its activity is regulated as follows. Inhibited by zinc. Converts beta-D-mannuronic acid (M) to alpha-L-guluronic acid (G), producing a polymer with gel-forming capacity, required for the formation of the cyst coat. The sequence is that of Mannuronan C5-epimerase AlgE1 from Azotobacter vinelandii.